Consider the following 450-residue polypeptide: FAD-linked oxidoreductase ptmO (450 aa).

The 172-residue stretch at 32–203 folds into the FAD-binding PCMH-type domain; it reads PPELPYAIVR…TRFFIRTRPA (172 aa).

The protein belongs to the oxygen-dependent FAD-linked oxidoreductase family. Requires FAD as cofactor.

It functions in the pathway secondary metabolite biosynthesis. Functionally, FAD-linked oxidoreductase; part of the gene cluster that mediates the biosynthesis of the indole diterpenes penitrems. The geranylgeranyl diphosphate (GGPP) synthase ptmG catalyzes the first step in penitrem biosynthesis via conversion of farnesyl pyrophosphate and isopentyl pyrophosphate into geranylgeranyl pyrophosphate (GGPP). Condensation of indole-3-glycerol phosphate with GGPP by the prenyl transferase ptmC then forms 3-geranylgeranylindole (3-GGI). Epoxidation by the FAD-dependent monooxygenase ptmM leads to a epoxidized-GGI that is substrate of the terpene cyclase ptmB for cyclization to yield paspaline. Paspaline is subsequently converted to 13-desoxypaxilline by the cytochrome P450 monooxygenase ptmP, the latter being then converted to paxilline by the cytochrome P450 monooxygenase ptmQ. Paxilline is converted to beta-paxitriol via C-10 ketoreduction by the short-chain dehydrogenase ptmH which can be monoprenylated at the C-20 by the indole diterpene prenyltransferase ptmD. A two-step elimination (acetylation and elimination) process performed by the O-acetyltransferase ptmV and ptmI leads to the production of the prenylated form of penijanthine. The FAD-linked oxidoreductase ptmO then converts the prenylated form of penijanthine into PC-M5 which is in turn transformed into PC-M4 by the aromatic dimethylallyltransferase ptmE. Five sequential oxidative transformations performed by the cytochrome P450 monooxygenases ptmK, ptmU, ptmL, ptmN and ptmJ yield the various penitrem compounds. PtmK, ptmU and ptmM are involved in the formation of the key bicyclic ring of penitrem C via the formation of the intermediates secopenitrem D and penitrem D. PtmL catalyzes the epoxidation of penitrem D and C to yield penitrem B and F, respectively. PtmJ catalyzes the last benzylic hydroxylation to convert penitrem B to prenitrem E and penitrem F to penitrem A. The protein is FAD-linked oxidoreductase ptmO of Penicillium ochrochloron.